A 74-amino-acid polypeptide reads, in one-letter code: Translation initiation factor IF-1 (74 aa).

In terms of domain architecture, S1-like spans 1–72 (MGKEDVIRME…TRGRIVYRKK (72 aa)).

It belongs to the IF-1 family. Component of the 30S ribosomal translation pre-initiation complex which assembles on the 30S ribosome in the order IF-2 and IF-3, IF-1 and N-formylmethionyl-tRNA(fMet); mRNA recruitment can occur at any time during PIC assembly.

The protein localises to the cytoplasm. In terms of biological role, one of the essential components for the initiation of protein synthesis. Stabilizes the binding of IF-2 and IF-3 on the 30S subunit to which N-formylmethionyl-tRNA(fMet) subsequently binds. Helps modulate mRNA selection, yielding the 30S pre-initiation complex (PIC). Upon addition of the 50S ribosomal subunit IF-1, IF-2 and IF-3 are released leaving the mature 70S translation initiation complex. This Thermotoga petrophila (strain ATCC BAA-488 / DSM 13995 / JCM 10881 / RKU-1) protein is Translation initiation factor IF-1.